Here is a 561-residue protein sequence, read N- to C-terminus: (+)-alpha-pinene synthase TPS2FN (561 aa).

(2E)-geranyl diphosphate contacts are provided by R276, D313, D317, R455, and D458. D313 and D317 together coordinate Mg(2+). A DDXXD motif motif is present at residues 313–317 (DDIYD). The Mg(2+) site is built by D458, T462, and E466.

The protein belongs to the terpene synthase family. Tpsb subfamily. The cofactor is Mg(2+). It depends on Mn(2+) as a cofactor. As to expression, expressed in glandular trichomes two to four weeks after flowering onset.

The enzyme catalyses (2E)-geranyl diphosphate = (1R,5R)-alpha-pinene + diphosphate. The catalysed reaction is (2E)-geranyl diphosphate = (4S)-limonene + diphosphate. It carries out the reaction (2E)-geranyl diphosphate = sabinene + diphosphate. It catalyses the reaction (2E)-geranyl diphosphate = beta-phellandrene + diphosphate. The enzyme catalyses (2E)-geranyl diphosphate = camphene + diphosphate. The catalysed reaction is (2E)-geranyl diphosphate = isoterpinolene + diphosphate. Its pathway is secondary metabolite biosynthesis; terpenoid biosynthesis. It functions in the pathway terpene metabolism; (-)-alpha-pinene biosynthesis; (-)-alpha-pinene from geranyl diphosphate: step 1/1. Its function is as follows. Involved in monoterpene (C10) olefins biosynthesis, constituants of cannabinoids and terpenoids-rich resins. Catalyzes mainly the conversion of (2E)-geranyl diphosphate to (+)-alpha-pinene, and also produces minor products such as camphene, sabinene, beta-phellandrene, (-)-limonene and isoterpinolene. This is (+)-alpha-pinene synthase TPS2FN from Cannabis sativa (Hemp).